The chain runs to 1398 residues: Protein timeless (1398 aa).

Residues 237 to 268 (VSTLQKLLSLWFEASLSESSEDNESNTSPPKQ) are necessary for normal circadian rhythm. 5 disordered regions span residues 254–300 (ESSE…GGMR), 322–452 (ARVP…QKFN), 478–555 (TKGK…LRRK), 1127–1147 (TASSPSRYHHTGPRNSLSSVS), and 1220–1239 (NHRTGPSGDPSDCIGSSSTT). Residues 273 to 290 (SSPMLTSDPTSDSSDNGS) show a composition bias toward low complexity. Positions 291–300 (NGRGMGGGMR) are enriched in gly residues. Positions 338–355 (MTGNDSEQPGSPEQSQPA) are enriched in polar residues. Over residues 365 to 375 (EDQRHRQLNEH) the composition is skewed to basic and acidic residues. The segment covering 376-390 (GEEDEDEDEVEEEEY) has biased composition (acidic residues). Polar residues-rich tracts occupy residues 400 to 421 (LNLTQQPADKVNNTTNPTSSAP), 440 to 452 (ASTSAHAQMQKFN), and 504 to 515 (QVENQESISTSS). Residues 522-531 (QGKPQHQKPP) are compositionally biased toward low complexity. The Nuclear localization signal motif lies at 550–560 (KELRRKKLVKR).

This sequence belongs to the timeless family. Forms a heterodimer with period (PER); the complex then translocates into the nucleus. Phosphorylated with a circadian rhythmicity. In terms of tissue distribution, expressed in head, photoreceptors, lateral neurons and glial cells in the lamina and medulla of the optic lobes. Expression follows a light-dark cycle, levels show a significant decrease at the end of the night and then remain low throughout the light period (at protein level).

It is found in the nucleus. Its subcellular location is the cytoplasm. The protein resides in the perinuclear region. Required for the production of circadian rhythms. The biological cycle depends on the rhythmic formation and nuclear localization of the TIM-PER complex. Light induces the degradation of TIM, which promotes elimination of PER. Nuclear activity of the heterodimer coordinatively regulates PER and TIM transcription through a negative feedback loop. Behaves as a negative element in circadian transcriptional loop. Does not appear to bind DNA, suggesting indirect transcriptional inhibition. The sequence is that of Protein timeless (tim) from Drosophila melanogaster (Fruit fly).